Reading from the N-terminus, the 355-residue chain is tRNA uridine(34) hydroxylase (355 aa).

In terms of domain architecture, Rhodanese spans 146-240 (DDPDTVFVDM…YARQAKAQGL (95 aa)). Cysteine 200 serves as the catalytic Cysteine persulfide intermediate.

Belongs to the TrhO family.

The enzyme catalyses uridine(34) in tRNA + AH2 + O2 = 5-hydroxyuridine(34) in tRNA + A + H2O. Catalyzes oxygen-dependent 5-hydroxyuridine (ho5U) modification at position 34 in tRNAs. This chain is tRNA uridine(34) hydroxylase, found in Pectobacterium atrosepticum (strain SCRI 1043 / ATCC BAA-672) (Erwinia carotovora subsp. atroseptica).